Consider the following 140-residue polypeptide: Ribosome maturation factor RimP (140 aa).

The protein belongs to the RimP family.

The protein resides in the cytoplasm. In terms of biological role, required for maturation of 30S ribosomal subunits. The chain is Ribosome maturation factor RimP from Campylobacter jejuni subsp. jejuni serotype O:23/36 (strain 81-176).